Here is a 562-residue protein sequence, read N- to C-terminus: Dihydroxy-acid dehydratase (562 aa).

Asp-80 is a Mg(2+) binding site. A [2Fe-2S] cluster-binding site is contributed by Cys-121. Positions 122 and 123 each coordinate Mg(2+). N6-carboxylysine is present on Lys-123. Position 194 (Cys-194) interacts with [2Fe-2S] cluster. Glu-446 lines the Mg(2+) pocket. Ser-472 (proton acceptor) is an active-site residue.

It belongs to the IlvD/Edd family. As to quaternary structure, homodimer. [2Fe-2S] cluster serves as cofactor. The cofactor is Mg(2+).

The enzyme catalyses (2R)-2,3-dihydroxy-3-methylbutanoate = 3-methyl-2-oxobutanoate + H2O. The catalysed reaction is (2R,3R)-2,3-dihydroxy-3-methylpentanoate = (S)-3-methyl-2-oxopentanoate + H2O. The protein operates within amino-acid biosynthesis; L-isoleucine biosynthesis; L-isoleucine from 2-oxobutanoate: step 3/4. It participates in amino-acid biosynthesis; L-valine biosynthesis; L-valine from pyruvate: step 3/4. In terms of biological role, functions in the biosynthesis of branched-chain amino acids. Catalyzes the dehydration of (2R,3R)-2,3-dihydroxy-3-methylpentanoate (2,3-dihydroxy-3-methylvalerate) into 2-oxo-3-methylpentanoate (2-oxo-3-methylvalerate) and of (2R)-2,3-dihydroxy-3-methylbutanoate (2,3-dihydroxyisovalerate) into 2-oxo-3-methylbutanoate (2-oxoisovalerate), the penultimate precursor to L-isoleucine and L-valine, respectively. The sequence is that of Dihydroxy-acid dehydratase from Staphylococcus aureus (strain COL).